A 156-amino-acid chain; its full sequence is MNKIESFKINHLKLMPGIYVSRKDYLGNEVLTTFDLRITAPNREPVMNTAEVHAIEHLGATFLRNKLENEVIYFGPMGCRTGFYLILVGDKKSEDIVDLIKELFEFISNYEGEIPGQSAKDCGNYSDMNLSMAKFYSNKYLNVINNIKKENLIYPE.

Fe cation contacts are provided by His-53, His-57, and Cys-122.

This sequence belongs to the LuxS family. In terms of assembly, homodimer. Fe cation serves as cofactor.

The catalysed reaction is S-(5-deoxy-D-ribos-5-yl)-L-homocysteine = (S)-4,5-dihydroxypentane-2,3-dione + L-homocysteine. Functionally, involved in the synthesis of autoinducer 2 (AI-2) which is secreted by bacteria and is used to communicate both the cell density and the metabolic potential of the environment. The regulation of gene expression in response to changes in cell density is called quorum sensing. Catalyzes the transformation of S-ribosylhomocysteine (RHC) to homocysteine (HC) and 4,5-dihydroxy-2,3-pentadione (DPD). The protein is S-ribosylhomocysteine lyase of Finegoldia magna (strain ATCC 29328 / DSM 20472 / WAL 2508) (Peptostreptococcus magnus).